The sequence spans 883 residues: Aldehyde-alcohol dehydrogenase (883 aa).

An aldehyde dehydrogenase region spans residues 13 to 456 (KLVAEKHVDE…DNVSAINLLN (444 aa)). NAD(+)-binding positions include 121 to 126 (ITPTTN), Gly-206, and Gly-224. The Nucleophile role is filled by Cys-257. Residues Glu-355, Leu-435, and 438–443 (GSYGRN) contribute to the NAD(+) site. A linker region spans residues 457–464 (IKKVGRRR). NAD(+) contacts are provided by residues Asp-500, Asp-534, 561–565 (GSPMD), 612–613 (TT), Val-625, Lys-634, and Leu-653. Positions 668, 672, 736, and 750 each coordinate Fe cation.

The protein in the N-terminal section; belongs to the aldehyde dehydrogenase family. In the C-terminal section; belongs to the iron-containing alcohol dehydrogenase family. It depends on Fe(2+) as a cofactor.

The enzyme catalyses an aldehyde + NAD(+) + H2O = a carboxylate + NADH + 2 H(+). It catalyses the reaction ethanol + NAD(+) = acetaldehyde + NADH + H(+). In terms of biological role, has alcohol dehydrogenase activity. Has aldehyde dehydrogenase activity. Plays a role in enhancing virulence in mice, under ethanol stress conditions, perhaps by inducing expression of pneumolysin (Ply) and increasing production of hydrogen peroxide H(2)O(2). May be considered a potential virulence factor. This Streptococcus pneumoniae serotype 2 (strain D39 / NCTC 7466) protein is Aldehyde-alcohol dehydrogenase.